We begin with the raw amino-acid sequence, 256 residues long: MLAKRIIPCLDVDNGRVVKGVQFVDIKDAGDPVEVARRYNEQGADEITFLDITATHHGRETTYDMVERIAETVFVPLTVGGGVRKIEDIRNLLNAGADKVAINSAAVFTPEFVAEAAAKFGSQCIVVAIDAKQVEDVEGQPRWEIFTHGGRKPTGLDAVAWAVKMAELGAGELLVTSMDGDGTKKGYDLALMKAITSAVNVPVIASGGVGNLQHLADGVLEGGADAVLAASIFHFGEYSIAEAKQFMAKQGIEMRL.

Residues aspartate 11 and aspartate 130 contribute to the active site.

Belongs to the HisA/HisF family. Heterodimer of HisH and HisF.

The protein resides in the cytoplasm. It carries out the reaction 5-[(5-phospho-1-deoxy-D-ribulos-1-ylimino)methylamino]-1-(5-phospho-beta-D-ribosyl)imidazole-4-carboxamide + L-glutamine = D-erythro-1-(imidazol-4-yl)glycerol 3-phosphate + 5-amino-1-(5-phospho-beta-D-ribosyl)imidazole-4-carboxamide + L-glutamate + H(+). The protein operates within amino-acid biosynthesis; L-histidine biosynthesis; L-histidine from 5-phospho-alpha-D-ribose 1-diphosphate: step 5/9. Functionally, IGPS catalyzes the conversion of PRFAR and glutamine to IGP, AICAR and glutamate. The HisF subunit catalyzes the cyclization activity that produces IGP and AICAR from PRFAR using the ammonia provided by the HisH subunit. The chain is Imidazole glycerol phosphate synthase subunit HisF from Psychrobacter sp. (strain PRwf-1).